The following is a 278-amino-acid chain: Potassium/proton antiporter CemA (278 aa).

4 helical membrane-spanning segments follow: residues 60–80, 155–175, 201–221, and 239–259; these read YLLLLITVPLIVNQISKSFVF, AMKNLLADVLAFVTFVYLIVT, FLIILFTDIFVGFHSTHGWEV, and IFLFIATFPVVLDTVFKYWIF.

Belongs to the CemA family.

The protein resides in the plastid. Its subcellular location is the chloroplast inner membrane. It carries out the reaction K(+)(in) + H(+)(out) = K(+)(out) + H(+)(in). Functionally, contributes to K(+)/H(+) antiport activity by supporting proton efflux to control proton extrusion and homeostasis in chloroplasts in a light-dependent manner to modulate photosynthesis. Prevents excessive induction of non-photochemical quenching (NPQ) under continuous-light conditions. Indirectly promotes efficient inorganic carbon uptake into chloroplasts. The protein is Potassium/proton antiporter CemA of Rhodomonas salina (Cryptomonas salina).